The primary structure comprises 654 residues: Pyoverdine export ATP-binding/permease protein PvdT (654 aa).

An ABC transporter domain is found at 6 to 245; the sequence is IELCDIRKAY…AHKGIQAEEL (240 aa). Residue 43–50 coordinates ATP; the sequence is GASGSGKS. 4 helical membrane-spanning segments follow: residues 282 to 302, 529 to 549, 584 to 604, and 614 to 634; these read ALTL…LAVG, LSLM…IGVM, AIML…VVGA, and AFAL…GVVF.

This sequence belongs to the ABC transporter superfamily. Macrolide exporter (TC 3.A.1.122) family. Part of the tripartite efflux system PvdRT-OpmQ, which is composed of an inner membrane component with both ATPase and permease domains, PvdT, a periplasmic membrane fusion protein, PvdR, and an outer membrane component, OpmQ.

The protein resides in the cell inner membrane. With respect to regulation, has a basal ATPase activity that is stimulated by PvdR. In vitro, interaction with PVD influences the affinity of PvdT to PvdR. Its function is as follows. Part of the tripartite efflux system PvdRT-OpmQ required for the secretion into the extracellular milieu of the siderophore pyoverdine (PVD), which is involved in iron acquisition. This subunit binds PVD and drives its secretion by hydrolyzing ATP. The system is responsible for export of newly synthesized PVD after the final steps of biosynthesis have taken place in the periplasm. It is also responsible for recycling of PVD after internalization of ferri-PVD into the periplasm by the outer-membrane receptor FpvA and release of iron from PVD, thus making PVD available for new cycles of iron uptake. Contributes to resistance against ampicillin. The chain is Pyoverdine export ATP-binding/permease protein PvdT from Pseudomonas putida (strain ATCC 47054 / DSM 6125 / CFBP 8728 / NCIMB 11950 / KT2440).